The primary structure comprises 340 residues: DNA polymerase III subunit delta' (340 aa).

In terms of assembly, the DNA polymerase holoenzyme is a complex that contains 10 different types of subunits. These subunits are organized into 3 functionally essential subassemblies: the pol III core, the beta sliding clamp processivity factor and the clamp-loading complex. The pol III core (subunits alpha,epsilon and theta) contains the polymerase and the 3'-5' exonuclease proofreading activities. The polymerase is tethered to the template via the sliding clamp processivity factor. The clamp-loading complex assembles the beta processivity factor onto the primer template and plays a central role in the organization and communication at the replication fork. This complex contains delta, delta', psi and chi, and copies of either or both of two different DnaX proteins, gamma and tau. The composition of the holoenzyme is, therefore: (alpha,epsilon,theta)[2]-(gamma/tau)[3]-delta,delta', psi,chi-beta[4].

It catalyses the reaction DNA(n) + a 2'-deoxyribonucleoside 5'-triphosphate = DNA(n+1) + diphosphate. Functionally, DNA polymerase III is a complex, multichain enzyme responsible for most of the replicative synthesis in bacteria. This DNA polymerase also exhibits 3' to 5' exonuclease activity. The chain is DNA polymerase III subunit delta' (holB) from Yersinia pestis.